A 353-amino-acid chain; its full sequence is Probable dual-specificity RNA methyltransferase RlmN (353 aa).

E104 functions as the Proton acceptor in the catalytic mechanism. The Radical SAM core domain maps to 112-341; sequence DGGRKTICIS…ILNRRSPGKD (230 aa). C119 and C346 form a disulfide bridge. [4Fe-4S] cluster-binding residues include C126, C130, and C133. Residues 173 to 174, S205, 228 to 230, and N304 contribute to the S-adenosyl-L-methionine site; these read GE and SLN. Catalysis depends on C346, which acts as the S-methylcysteine intermediate.

Belongs to the radical SAM superfamily. RlmN family. [4Fe-4S] cluster serves as cofactor.

It localises to the cytoplasm. The enzyme catalyses adenosine(2503) in 23S rRNA + 2 reduced [2Fe-2S]-[ferredoxin] + 2 S-adenosyl-L-methionine = 2-methyladenosine(2503) in 23S rRNA + 5'-deoxyadenosine + L-methionine + 2 oxidized [2Fe-2S]-[ferredoxin] + S-adenosyl-L-homocysteine. It carries out the reaction adenosine(37) in tRNA + 2 reduced [2Fe-2S]-[ferredoxin] + 2 S-adenosyl-L-methionine = 2-methyladenosine(37) in tRNA + 5'-deoxyadenosine + L-methionine + 2 oxidized [2Fe-2S]-[ferredoxin] + S-adenosyl-L-homocysteine. Its function is as follows. Specifically methylates position 2 of adenine 2503 in 23S rRNA and position 2 of adenine 37 in tRNAs. This is Probable dual-specificity RNA methyltransferase RlmN from Leptospira interrogans serogroup Icterohaemorrhagiae serovar copenhageni (strain Fiocruz L1-130).